The chain runs to 68 residues: Large ribosomal subunit protein bL31 (68 aa).

Positions 16, 18, 37, and 40 each coordinate Zn(2+).

The protein belongs to the bacterial ribosomal protein bL31 family. Type A subfamily. Part of the 50S ribosomal subunit. It depends on Zn(2+) as a cofactor.

Binds the 23S rRNA. This chain is Large ribosomal subunit protein bL31, found in Nitrosococcus oceani (strain ATCC 19707 / BCRC 17464 / JCM 30415 / NCIMB 11848 / C-107).